A 326-amino-acid chain; its full sequence is JNK1/MAPK8-associated membrane protein homolog (326 aa).

The Lumenal portion of the chain corresponds to 1-71; it reads MSSLSGHAST…CESCDTPLQP (71 aa). Asn-27 is a glycosylation site (N-linked (GlcNAc...) asparagine). The chain crosses the membrane as a helical span at residues 72–92; that stretch reads YDWMYLLFIALLPLLLHMQFI. The Cytoplasmic segment spans residues 93–108; sequence RIARKYCRTRYYEVSE. Residues 109-129 traverse the membrane as a helical segment; sequence YLCVILENVIACVIAVLIYPP. The Lumenal portion of the chain corresponds to 130-166; that stretch reads RFTFFLNGCSKTDIKEWYPACYNPRIGYTKTMRCTYE. A helical membrane pass occupies residues 167–187; sequence VVFPLYSITFIHHLILIGSIL. The Cytoplasmic portion of the chain corresponds to 188–208; it reads VLRSTLYCVLLYKTYNGKPFY. 2 helical membrane-spanning segments follow: residues 209 to 229 and 230 to 250; these read AAIVSVPILAVIHAVLSGVVF and YTFPYILLIGSLWAMCFHLAL. The Cytoplasmic segment spans residues 251-269; that stretch reads EGKRPLKEMIVRIATSPTH. Residues 270 to 290 traverse the membrane as a helical segment; that stretch reads LIFLSITMLMLSFGVIAIIAP. Residues 291–296 lie on the Lumenal side of the membrane; that stretch reads LDIPYR. A helical transmembrane segment spans residues 297-317; the sequence is WSFLCIVPVPFIFYMATIPFS. At 318-326 the chain is on the cytoplasmic side; sequence NPTTTMRLS.

The protein resides in the endoplasmic reticulum membrane. In terms of biological role, facilitates degradation of misfolded endoplasmic reticulum (ER) proteins through the recruitment of components of the proteasome and endoplasmic reticulum-associated degradation (ERAD) system. Involved in ER stress response. The polypeptide is JNK1/MAPK8-associated membrane protein homolog (Caenorhabditis elegans).